The following is a 207-amino-acid chain: LexA repressor (207 aa).

The segment at residues 28–48 (RAEIARELGFRSANAAEEHLK) is a DNA-binding region (H-T-H motif). Catalysis depends on for autocatalytic cleavage activity residues serine 124 and lysine 161.

Belongs to the peptidase S24 family. Homodimer.

The enzyme catalyses Hydrolysis of Ala-|-Gly bond in repressor LexA.. Its function is as follows. Represses a number of genes involved in the response to DNA damage (SOS response), including recA and lexA. In the presence of single-stranded DNA, RecA interacts with LexA causing an autocatalytic cleavage which disrupts the DNA-binding part of LexA, leading to derepression of the SOS regulon and eventually DNA repair. The polypeptide is LexA repressor (Vibrio vulnificus (strain CMCP6)).